Here is a 116-residue protein sequence, read N- to C-terminus: Large ribosomal subunit protein uL18 (116 aa).

The protein belongs to the universal ribosomal protein uL18 family. Part of the 50S ribosomal subunit; part of the 5S rRNA/L5/L18/L25 subcomplex. Contacts the 5S and 23S rRNAs.

Its function is as follows. This is one of the proteins that bind and probably mediate the attachment of the 5S RNA into the large ribosomal subunit, where it forms part of the central protuberance. This chain is Large ribosomal subunit protein uL18, found in Mycoplasma capricolum subsp. capricolum (strain California kid / ATCC 27343 / NCTC 10154).